Reading from the N-terminus, the 553-residue chain is Probable bifunctional riboflavin biosynthesis protein RIBA 2, chloroplastic (553 aa).

The transit peptide at Met1–Ala56 directs the protein to the chloroplast. A DHBP synthase region spans residues Asp62 to Lys336. The segment at Tyr70 to Pro90 is disordered. The span at Gly72–Arg85 shows a compositional bias: polar residues. Residues Arg160–Glu161, Asp165, Arg275–Thr279, and Glu299 each bind D-ribulose 5-phosphate. Glu161 lines the Mg(2+) pocket. His278 serves as a coordination point for Mg(2+). The GTP cyclohydrolase II stretch occupies residues Arg337–His553. Residue Arg387–Glu391 participates in GTP binding. The Zn(2+) site is built by Cys392, Cys403, and Cys405. GTP contacts are provided by residues Gln408, Glu431–Arg433, and Thr453. The Proton acceptor; for GTP cyclohydrolase activity role is filled by Asp465. Catalysis depends on Arg467, which acts as the Nucleophile; for GTP cyclohydrolase activity. 2 residues coordinate GTP: Thr488 and Lys493.

This sequence in the N-terminal section; belongs to the DHBP synthase family. The protein in the C-terminal section; belongs to the GTP cyclohydrolase II family. The cofactor is Mg(2+). It depends on Mn(2+) as a cofactor. Zn(2+) serves as cofactor.

It localises to the plastid. The protein localises to the chloroplast. The enzyme catalyses D-ribulose 5-phosphate = (2S)-2-hydroxy-3-oxobutyl phosphate + formate + H(+). It carries out the reaction GTP + 4 H2O = 2,5-diamino-6-hydroxy-4-(5-phosphoribosylamino)-pyrimidine + formate + 2 phosphate + 3 H(+). It functions in the pathway cofactor biosynthesis; riboflavin biosynthesis; 2-hydroxy-3-oxobutyl phosphate from D-ribulose 5-phosphate: step 1/1. It participates in cofactor biosynthesis; riboflavin biosynthesis; 5-amino-6-(D-ribitylamino)uracil from GTP: step 1/4. Functionally, involved in riboflavin biosynthesis. Catalyzes both the conversion of D-ribulose 5-phosphate to formate and 3,4-dihydroxy-2-butanone 4-phosphate and the conversion of GTP to 2,5-diamino-6-ribosylamino-4(3H)-pyrimidinone 5'-phosphate (DARP), formate and pyrophosphate. In Oryza sativa subsp. japonica (Rice), this protein is Probable bifunctional riboflavin biosynthesis protein RIBA 2, chloroplastic (RIBA2).